We begin with the raw amino-acid sequence, 364 residues long: Peptide chain release factor 2 (364 aa).

N5-methylglutamine is present on glutamine 251.

This sequence belongs to the prokaryotic/mitochondrial release factor family. Methylated by PrmC. Methylation increases the termination efficiency of RF2.

The protein resides in the cytoplasm. Peptide chain release factor 2 directs the termination of translation in response to the peptide chain termination codons UGA and UAA. The protein is Peptide chain release factor 2 of Sulfurovum sp. (strain NBC37-1).